A 127-amino-acid polypeptide reads, in one-letter code: E3 ubiquitin-protein ligase PPP1R11 (127 aa).

Disordered stretches follow at residues 1–55 (MAEA…EHMG) and 70–127 (AFGE…PMQH). N-acetylalanine is present on A2. Positions 11 to 23 (ETVTETTVTVTTE) are enriched in low complexity. The segment covering 40–55 (KKVEWSSDTVDNEHMG) has biased composition (basic and acidic residues). Positions 53–63 (HMGRRSSKCCC) are atypical RING finger domain 1. Phosphoserine is present on residues S74 and S75. At T76 the chain carries Phosphothreonine. S78 carries the phosphoserine modification. The atypical RING finger domain 2 stretch occupies residues 86–95 (CGHTHCVRGH). Basic residues predominate over residues 90 to 100 (HCVRGHRKGRR). Residues 103–127 (TPGPTPTTPPQPPDPSQPPPGPMQH) show a composition bias toward pro residues. Position 110 is a phosphothreonine (T110).

Interacts with TLR2 and UBE2D2. Post-translationally, auto-ubiquitinated.

It catalyses the reaction S-ubiquitinyl-[E2 ubiquitin-conjugating enzyme]-L-cysteine + [acceptor protein]-L-lysine = [E2 ubiquitin-conjugating enzyme]-L-cysteine + N(6)-ubiquitinyl-[acceptor protein]-L-lysine.. It participates in protein modification; protein ubiquitination. In terms of biological role, atypical E3 ubiquitin-protein ligase which ubiquitinates TLR2 at 'Lys-754' leading to its degradation by the proteasome. Plays a role in regulating inflammatory cytokine release and gram-positive bacterial clearance by functioning, in part, through the ubiquitination and degradation of TLR2. Inhibitor of protein phosphatase 1. This Rattus norvegicus (Rat) protein is E3 ubiquitin-protein ligase PPP1R11 (Ppp1r11).